Reading from the N-terminus, the 114-residue chain is Fumarate reductase subunit D (114 aa).

Transmembrane regions (helical) follow at residues 25 to 45 (SGLA…FGII), 50 to 70 (IIAF…TIFP), and 94 to 114 (LIFY…VIAI).

This sequence belongs to the FrdD family. In terms of assembly, part of an enzyme complex containing four subunits: a flavoprotein (FrdA), an iron-sulfur protein (FrdB), and two hydrophobic anchor proteins (FrdC and FrdD).

It localises to the cell inner membrane. Functionally, anchors the catalytic components of the fumarate reductase complex to the cell membrane, binds quinones. In Mannheimia succiniciproducens (strain KCTC 0769BP / MBEL55E), this protein is Fumarate reductase subunit D.